The primary structure comprises 573 residues: Developmental and secondary metabolism regulator veA (573 aa).

The segment covering 1–11 has biased composition (pro residues); the sequence is MATLAAPPPPL. 2 disordered regions span residues 1-24 and 39-63; these read MATL…SRIT and QPKR…DPPP. One can recognise a Velvet domain in the interval 27–230; the sequence is GKKITYKLNI…AEQGCRVRIR (204 aa). Positions 41–46 match the Nuclear localization signal motif; it reads KRARAC. Residues Thr167 and Thr170 each carry the phosphothreonine modification. Ser183 carries the phosphoserine modification. 3 disordered regions span residues 236–295, 307–367, and 384–573; these read RRRG…RRPS, YQRP…SYQS, and SHIP…ATMR. Residues 241-260 show a composition bias toward basic and acidic residues; sequence KRTEDYDYDNERGYNNRRPD. At Tyr254 the chain carries Phosphotyrosine. Pro residues-rich tracts occupy residues 318–339 and 347–361; these read SSTP…PSTP and PAPP…PPLH. The segment covering 387–412 has biased composition (low complexity); sequence PQQTTTPTHPYSPRSSISHSRNQSIS. Residues 452-493 are compositionally biased toward polar residues; that stretch reads PSVNSRSKTPSNMITSLPPIQSLSELPSTTSQPSSAIGSSPA. The PEST stretch occupies residues 459 to 498; that stretch reads KTPSNMITSLPPIQSLSELPSTTSQPSSAIGSSPANEPGP. A compositionally biased stretch (basic and acidic residues) spans 510-522; the sequence is RTYEESFGHDDRP.

The protein belongs to the velvet family. VeA subfamily. As to quaternary structure, component of the heterotrimeric velvet complex composed of laeA, veA and velB; VeA acting as a bridging protein between laeA and velB. Interacts with the light-sensing phytochrome fphA. Interacts with llmF. In terms of processing, phosphorylated at Thr-167, Thr-170, Ser-183 and Tyr-254. Thr-167 should be phosphorylated and T170 and S183 should be dephosphorylated to achieve light induction of conidiation. Phosphorylation of Ser-183 and Tyr-254 influence sterigmatocystin production in a light-independent manner. Phosphorylation of Thr-167 and Thr-170 modulates expression of veA.

The protein localises to the nucleus. Its subcellular location is the cytoplasm. Its function is as follows. Component of the velvet transcription factor complex that controls sexual/asexual developmental ratio in response to light, promoting sexual development in the darkness while stimulating asexual sporulation under illumination. The velvet complex acts as a global regulator for secondary metabolite gene expression. Controls the expression of the sterigmatocystin and penicillin gene clusters. Represses the cryptic ors gene cluster producing orsellinic acid and its F9775 derivatives in a laeA-independent manner. Required for full induction of faoA gene expression by fructosyl amines. Positively regulates the expression of the early sexual development gene esdC. Controls the expression of mannoprotein mnpA. The chain is Developmental and secondary metabolism regulator veA from Emericella nidulans (strain FGSC A4 / ATCC 38163 / CBS 112.46 / NRRL 194 / M139) (Aspergillus nidulans).